Consider the following 316-residue polypeptide: Phosphate acyltransferase (316 aa).

Belongs to the PlsX family. In terms of assembly, homodimer. Probably interacts with PlsY.

It is found in the cytoplasm. The enzyme catalyses a fatty acyl-[ACP] + phosphate = an acyl phosphate + holo-[ACP]. It functions in the pathway lipid metabolism; phospholipid metabolism. Catalyzes the reversible formation of acyl-phosphate (acyl-PO(4)) from acyl-[acyl-carrier-protein] (acyl-ACP). This enzyme utilizes acyl-ACP as fatty acyl donor, but not acyl-CoA. In Chlamydia caviae (strain ATCC VR-813 / DSM 19441 / 03DC25 / GPIC) (Chlamydophila caviae), this protein is Phosphate acyltransferase.